The sequence spans 497 residues: Acetyl-coenzyme A carboxylase carboxyl transferase subunit beta, chloroplastic (497 aa).

The CoA carboxyltransferase N-terminal domain occupies 230-497; sequence LWVQCENCYG…FFPVNSNSIK (268 aa). Residues C234, C237, C253, and C256 each contribute to the Zn(2+) site. The C4-type zinc finger occupies 234 to 256; the sequence is CENCYGLNYKKFFRSKFNICEQC.

It belongs to the AccD/PCCB family. In terms of assembly, acetyl-CoA carboxylase is a heterohexamer composed of biotin carboxyl carrier protein, biotin carboxylase and 2 subunits each of ACCase subunit alpha and ACCase plastid-coded subunit beta (accD). Zn(2+) is required as a cofactor.

Its subcellular location is the plastid. The protein localises to the chloroplast stroma. It catalyses the reaction N(6)-carboxybiotinyl-L-lysyl-[protein] + acetyl-CoA = N(6)-biotinyl-L-lysyl-[protein] + malonyl-CoA. The protein operates within lipid metabolism; malonyl-CoA biosynthesis; malonyl-CoA from acetyl-CoA: step 1/1. Its function is as follows. Component of the acetyl coenzyme A carboxylase (ACC) complex. Biotin carboxylase (BC) catalyzes the carboxylation of biotin on its carrier protein (BCCP) and then the CO(2) group is transferred by the transcarboxylase to acetyl-CoA to form malonyl-CoA. In Nandina domestica (Heavenly bamboo), this protein is Acetyl-coenzyme A carboxylase carboxyl transferase subunit beta, chloroplastic.